The primary structure comprises 217 residues: Probable GTP-binding protein EngB (217 aa).

The EngB-type G domain occupies 29 to 213 (GPSEVAFAGR…RQAIAQTVGI (185 aa)). GTP is bound by residues 37 to 44 (GRSNVGKS), 64 to 68 (GRTQE), 91 to 94 (DMPG), 158 to 161 (TKTD), and 192 to 194 (TSS). Mg(2+)-binding residues include serine 44 and threonine 66.

This sequence belongs to the TRAFAC class TrmE-Era-EngA-EngB-Septin-like GTPase superfamily. EngB GTPase family. The cofactor is Mg(2+).

Necessary for normal cell division and for the maintenance of normal septation. This is Probable GTP-binding protein EngB from Rhizobium etli (strain CIAT 652).